Reading from the N-terminus, the 211-residue chain is Probable nicotinate-nucleotide adenylyltransferase (211 aa).

Belongs to the NadD family.

The enzyme catalyses nicotinate beta-D-ribonucleotide + ATP + H(+) = deamido-NAD(+) + diphosphate. Its pathway is cofactor biosynthesis; NAD(+) biosynthesis; deamido-NAD(+) from nicotinate D-ribonucleotide: step 1/1. Its function is as follows. Catalyzes the reversible adenylation of nicotinate mononucleotide (NaMN) to nicotinic acid adenine dinucleotide (NaAD). The protein is Probable nicotinate-nucleotide adenylyltransferase of Cellvibrio japonicus (strain Ueda107) (Pseudomonas fluorescens subsp. cellulosa).